The following is a 384-amino-acid chain: Glutamate 5-kinase (384 aa).

Lysine 24 contacts ATP. Substrate contacts are provided by serine 64, aspartate 149, and asparagine 161. Residues 181-182 (TD) and 223-229 (TGGMRTK) contribute to the ATP site. Residues 288-370 (PGAILIDAGA…RDIQTLLGYT (83 aa)) form the PUA domain.

The protein belongs to the glutamate 5-kinase family.

Its subcellular location is the cytoplasm. It catalyses the reaction L-glutamate + ATP = L-glutamyl 5-phosphate + ADP. It participates in amino-acid biosynthesis; L-proline biosynthesis; L-glutamate 5-semialdehyde from L-glutamate: step 1/2. Its function is as follows. Catalyzes the transfer of a phosphate group to glutamate to form L-glutamate 5-phosphate. This Xylella fastidiosa (strain M12) protein is Glutamate 5-kinase.